Here is a 203-residue protein sequence, read N- to C-terminus: Cbp/p300-interacting transactivator 1 (203 aa).

2 disordered regions span residues Met-1–Gln-24 and Thr-51–Asn-86. Residues Pro-61–Ser-84 are compositionally biased toward low complexity. The short motif at Leu-168 to Leu-177 is the Nuclear export signal element.

The protein belongs to the CITED family. As to quaternary structure, homodimer. Binds to RBM14. Interacts (via N-terminus) with HSPA8; the interaction suppresses the association of CITED1 with p300/CBP and SMAD-mediated transcription transactivation. Interacts (via C-terminus) with TOX3 (via HGM box); the interaction increases estrogen-response element (ERE)-dependent transcription and protection against cell death. Interacts with ESR1; the interaction occurs in a estrogen-dependent manner. Interacts (unphosphorylated form preferentially and via C-terminus) with EP300. Interacts (via C-terminus) with CREBBP. Interacts with EGR2. In terms of processing, phosphorylated. Phosphorylation changes in a cell cycle-dependent manner and reduces its transcriptional cofactor activity. Expressed in calvarial osteoblasts. Expressed in nulliparous mammary epithelial cells; absent in pregnant mice and in lacting mammary glands. Also expressed in mammary tumors (at protein level). Expressed only in melanocytes and testis. Expressed at high levels in the strongly pigmented melanoma cells but at low levels in the weakly pigmented cells.

Its subcellular location is the nucleus. It is found in the cytoplasm. Its function is as follows. Transcriptional coactivator of the p300/CBP-mediated transcription complex. Enhances SMAD-mediated transcription by strengthening the functional link between the DNA-binding SMAD transcription factors and the p300/CBP transcription coactivator complex. Stimulates estrogen-dependent transactivation activity mediated by estrogen receptors signaling; stabilizes the interaction of estrogen receptor ESR1 and histone acetyltransferase EP300. Positively regulates TGF-beta signaling through its association with the SMAD/p300/CBP-mediated transcriptional coactivator complex. Induces transcription from estrogen-responsive promoters and protection against cell death. Potentiates EGR2-mediated transcriptional activation activity from the ERBB2 promoter. Acts as an inhibitor of osteoblastic mineralization through a cAMP-dependent parathyroid hormone receptor signaling. May play a role in pigmentation of melanocytes. Associates with chromatin to the estrogen-responsive TGF-alpha promoter region in a estrogen-dependent manner. This chain is Cbp/p300-interacting transactivator 1 (Cited1), found in Mus musculus (Mouse).